Reading from the N-terminus, the 135-residue chain is Holo-[acyl-carrier-protein] synthase (135 aa).

Mg(2+)-binding residues include aspartate 7 and glutamate 57.

Belongs to the P-Pant transferase superfamily. AcpS family. Mg(2+) is required as a cofactor.

It is found in the cytoplasm. It catalyses the reaction apo-[ACP] + CoA = holo-[ACP] + adenosine 3',5'-bisphosphate + H(+). Its function is as follows. Transfers the 4'-phosphopantetheine moiety from coenzyme A to a Ser of acyl-carrier-protein. The protein is Holo-[acyl-carrier-protein] synthase of Corynebacterium glutamicum (strain ATCC 13032 / DSM 20300 / JCM 1318 / BCRC 11384 / CCUG 27702 / LMG 3730 / NBRC 12168 / NCIMB 10025 / NRRL B-2784 / 534).